The sequence spans 88 residues: Small ribosomal subunit protein bS16 (88 aa).

It belongs to the bacterial ribosomal protein bS16 family.

This Symbiobacterium thermophilum (strain DSM 24528 / JCM 14929 / IAM 14863 / T) protein is Small ribosomal subunit protein bS16.